The primary structure comprises 537 residues: uncharacterized protein (537 aa).

6 helical membrane passes run 5-25 (IGLG…PWFV), 40-60 (LAVA…FFGW), 63-83 (VLWV…MAVV), 115-135 (GLYY…HLEG), 149-169 (VYLL…WVTL), and 197-217 (VGIV…ALVI).

It is found in the plastid. The protein resides in the chloroplast membrane. This is an uncharacterized protein from Ostreococcus tauri.